Here is a 533-residue protein sequence, read N- to C-terminus: GPI mannosyltransferase 4 (533 aa).

The next 6 helical transmembrane spans lie at 8–28 (AIIY…SSYI), 61–81 (IRSV…CRCI), 91–111 (ILLF…LSIW), 144–164 (IETI…SVPL), 175–195 (LLAI…AFVI), and 216–236 (IFLH…ACIL). N-linked (GlcNAc...) asparagine glycosylation is present at Asn-261. 4 helical membrane passes run 274 to 294 (FFTN…LWDV), 297 to 317 (PATW…HQEP), 319 to 335 (FLLP…GCLV), and 338 to 358 (YWIK…FGIM). N-linked (GlcNAc...) asparagine glycans are attached at residues Asn-378, Asn-419, Asn-425, Asn-452, Asn-477, and Asn-518.

Belongs to the glycosyltransferase 22 family. PIGZ subfamily.

Its subcellular location is the endoplasmic reticulum membrane. The protein operates within glycolipid biosynthesis; glycosylphosphatidylinositol-anchor biosynthesis. Its function is as follows. Alpha-1,2-mannosyltransferase involved in glycosylphosphatidylinositol-anchor biosynthesis. Transfers a fourth mannose to trimannosyl-GPIs during GPI precursor assembly. The presence of a fourth mannose in GPI is essential in fungi. This is GPI mannosyltransferase 4 (smp3) from Schizosaccharomyces pombe (strain 972 / ATCC 24843) (Fission yeast).